The primary structure comprises 165 residues: SsrA-binding protein (165 aa).

Over residues 135–158 (QAHDKRQDMARRDAQREVTRELGR) the composition is skewed to basic and acidic residues. The disordered stretch occupies residues 135–165 (QAHDKRQDMARRDAQREVTRELGRRVKGMTS).

It belongs to the SmpB family.

The protein resides in the cytoplasm. Its function is as follows. Required for rescue of stalled ribosomes mediated by trans-translation. Binds to transfer-messenger RNA (tmRNA), required for stable association of tmRNA with ribosomes. tmRNA and SmpB together mimic tRNA shape, replacing the anticodon stem-loop with SmpB. tmRNA is encoded by the ssrA gene; the 2 termini fold to resemble tRNA(Ala) and it encodes a 'tag peptide', a short internal open reading frame. During trans-translation Ala-aminoacylated tmRNA acts like a tRNA, entering the A-site of stalled ribosomes, displacing the stalled mRNA. The ribosome then switches to translate the ORF on the tmRNA; the nascent peptide is terminated with the 'tag peptide' encoded by the tmRNA and targeted for degradation. The ribosome is freed to recommence translation, which seems to be the essential function of trans-translation. The sequence is that of SsrA-binding protein from Mycolicibacterium vanbaalenii (strain DSM 7251 / JCM 13017 / BCRC 16820 / KCTC 9966 / NRRL B-24157 / PYR-1) (Mycobacterium vanbaalenii).